The following is a 171-amino-acid chain: Probable deoxyuridine 5'-triphosphate nucleotidohydrolase (171 aa).

Belongs to the dCTP deaminase family. Archaeal dUTPase subfamily.

The enzyme catalyses dUTP + H2O = dUMP + diphosphate + H(+). The protein operates within pyrimidine metabolism; dUMP biosynthesis; dUMP from dCTP (dUTP route): step 2/2. This enzyme is involved in nucleotide metabolism: it produces dUMP, the immediate precursor of thymidine nucleotides and it decreases the intracellular concentration of dUTP so that uracil cannot be incorporated into DNA. The polypeptide is Probable deoxyuridine 5'-triphosphate nucleotidohydrolase (Methanosarcina mazei (strain ATCC BAA-159 / DSM 3647 / Goe1 / Go1 / JCM 11833 / OCM 88) (Methanosarcina frisia)).